Here is a 123-residue protein sequence, read N- to C-terminus: Large ribosomal subunit protein bL21 (123 aa).

It belongs to the bacterial ribosomal protein bL21 family. In terms of assembly, part of the 50S ribosomal subunit. Contacts protein L20.

In terms of biological role, this protein binds to 23S rRNA in the presence of protein L20. The chain is Large ribosomal subunit protein bL21 from Rhizobium meliloti (strain 1021) (Ensifer meliloti).